The following is a 718-amino-acid chain: Phenylalanine--tRNA ligase beta subunit (718 aa).

One can recognise a tRNA-binding domain in the interval 39–153 (LNEISGIKFG…IFDLESNPLK (115 aa)). The B5 domain maps to 386-460 (SKKTFLDLNY…RFYGLEKLKD (75 aa)). Residues aspartate 438, aspartate 444, and aspartate 448 each contribute to the Mg(2+) site.

It belongs to the phenylalanyl-tRNA synthetase beta subunit family. Type 1 subfamily. Tetramer of two alpha and two beta subunits. Mg(2+) is required as a cofactor.

The protein resides in the cytoplasm. It carries out the reaction tRNA(Phe) + L-phenylalanine + ATP = L-phenylalanyl-tRNA(Phe) + AMP + diphosphate + H(+). In Mesomycoplasma hyopneumoniae (strain 7448) (Mycoplasma hyopneumoniae), this protein is Phenylalanine--tRNA ligase beta subunit.